The sequence spans 1322 residues: Putative DNA ligase 4 (1322 aa).

The ATP site is built by Glu-265, Lys-267, Arg-272, Arg-287, Glu-317, Phe-387, Glu-497, Lys-502, Arg-513, Lys-519, and Lys-521. Residue Lys-267 is the N6-AMP-lysine intermediate of the active site. Glu-317 contributes to the Mg(2+) binding site. Residue Glu-497 participates in Mg(2+) binding. BRCT domains are found at residues 686–768 and 825–935; these read LDVQ…PKFD and ERFC…TYSL. Disordered stretches follow at residues 945–1212 and 1245–1310; these read IERS…SATC and AEAK…KKVS. The span at 957 to 969 shows a compositional bias: basic and acidic residues; it reads DKLEENEKADTSH. Composition is skewed to basic residues over residues 970 to 979 and 994 to 1005; these read VKHAPRKRGR and PVRRTRARRGNQ. 2 stretches are compositionally biased toward basic and acidic residues: residues 1007–1022 and 1033–1047; these read AKID…HGET and NISK…KDQV. The segment covering 1051–1063 has biased composition (basic residues); it reads PVRRTRARRGKQH. 3 stretches are compositionally biased toward basic and acidic residues: residues 1082–1104, 1125–1161, and 1190–1204; these read DDQR…RDQG, AKID…KDQE, and PKHE…RDTA. A compositionally biased stretch (low complexity) spans 1261-1288; it reads SSYVAPVPQASASSASSSGVPAPHAGSS.

The protein belongs to the ATP-dependent DNA ligase family. It depends on Mg(2+) as a cofactor.

The protein resides in the nucleus. It carries out the reaction ATP + (deoxyribonucleotide)n-3'-hydroxyl + 5'-phospho-(deoxyribonucleotide)m = (deoxyribonucleotide)n+m + AMP + diphosphate.. Functionally, DNA ligase involved in DNA non-homologous end joining (NHEJ); required for double-strand break (DSB) repair. The polypeptide is Putative DNA ligase 4 (LIG4) (Oryza sativa subsp. japonica (Rice)).